The chain runs to 260 residues: Small ribosomal subunit protein uS2 (260 aa).

This sequence belongs to the universal ribosomal protein uS2 family.

The sequence is that of Small ribosomal subunit protein uS2 from Mesorhizobium japonicum (strain LMG 29417 / CECT 9101 / MAFF 303099) (Mesorhizobium loti (strain MAFF 303099)).